The primary structure comprises 260 residues: Tryptophan synthase alpha chain (260 aa).

Active-site proton acceptor residues include Glu-52 and Asp-63.

It belongs to the TrpA family. In terms of assembly, tetramer of two alpha and two beta chains.

It catalyses the reaction (1S,2R)-1-C-(indol-3-yl)glycerol 3-phosphate + L-serine = D-glyceraldehyde 3-phosphate + L-tryptophan + H2O. Its pathway is amino-acid biosynthesis; L-tryptophan biosynthesis; L-tryptophan from chorismate: step 5/5. Functionally, the alpha subunit is responsible for the aldol cleavage of indoleglycerol phosphate to indole and glyceraldehyde 3-phosphate. The sequence is that of Tryptophan synthase alpha chain from Streptococcus thermophilus (strain ATCC BAA-491 / LMD-9).